A 383-amino-acid chain; its full sequence is Queuine tRNA-ribosyltransferase (383 aa).

Asp-90 functions as the Proton acceptor in the catalytic mechanism. Substrate contacts are provided by residues 90–94 (DSGGF), Asp-144, Gln-193, and Gly-227. The tract at residues 258–264 (GVGTPED) is RNA binding. Catalysis depends on Asp-277, which acts as the Nucleophile. Positions 282–286 (TRNAR) are RNA binding; important for wobble base 34 recognition. Residues Cys-315, Cys-317, Cys-320, and His-346 each contribute to the Zn(2+) site.

It belongs to the queuine tRNA-ribosyltransferase family. In terms of assembly, homodimer. Within each dimer, one monomer is responsible for RNA recognition and catalysis, while the other monomer binds to the replacement base PreQ1. The cofactor is Zn(2+).

The catalysed reaction is 7-aminomethyl-7-carbaguanine + guanosine(34) in tRNA = 7-aminomethyl-7-carbaguanosine(34) in tRNA + guanine. The protein operates within tRNA modification; tRNA-queuosine biosynthesis. Functionally, catalyzes the base-exchange of a guanine (G) residue with the queuine precursor 7-aminomethyl-7-deazaguanine (PreQ1) at position 34 (anticodon wobble position) in tRNAs with GU(N) anticodons (tRNA-Asp, -Asn, -His and -Tyr). Catalysis occurs through a double-displacement mechanism. The nucleophile active site attacks the C1' of nucleotide 34 to detach the guanine base from the RNA, forming a covalent enzyme-RNA intermediate. The proton acceptor active site deprotonates the incoming PreQ1, allowing a nucleophilic attack on the C1' of the ribose to form the product. After dissociation, two additional enzymatic reactions on the tRNA convert PreQ1 to queuine (Q), resulting in the hypermodified nucleoside queuosine (7-(((4,5-cis-dihydroxy-2-cyclopenten-1-yl)amino)methyl)-7-deazaguanosine). The polypeptide is Queuine tRNA-ribosyltransferase (Ralstonia nicotianae (strain ATCC BAA-1114 / GMI1000) (Ralstonia solanacearum)).